Consider the following 132-residue polypeptide: Holo-[acyl-carrier-protein] synthase (132 aa).

2 residues coordinate Mg(2+): Asp-8 and Glu-62.

Belongs to the P-Pant transferase superfamily. AcpS family. Mg(2+) serves as cofactor.

It is found in the cytoplasm. The enzyme catalyses apo-[ACP] + CoA = holo-[ACP] + adenosine 3',5'-bisphosphate + H(+). In terms of biological role, transfers the 4'-phosphopantetheine moiety from coenzyme A to a Ser of acyl-carrier-protein. This is Holo-[acyl-carrier-protein] synthase from Polaromonas sp. (strain JS666 / ATCC BAA-500).